Reading from the N-terminus, the 170-residue chain is Small ribosomal subunit protein uS9 (170 aa).

The protein belongs to the universal ribosomal protein uS9 family.

This is Small ribosomal subunit protein uS9 from Rhodococcus opacus (strain B4).